The sequence spans 499 residues: Glutamyl-tRNA(Gln) amidotransferase subunit A (499 aa).

Active-site charge relay system residues include K75 and S150. The active-site Acyl-ester intermediate is the S174.

It belongs to the amidase family. GatA subfamily. In terms of assembly, heterotrimer of A, B and C subunits.

It carries out the reaction L-glutamyl-tRNA(Gln) + L-glutamine + ATP + H2O = L-glutaminyl-tRNA(Gln) + L-glutamate + ADP + phosphate + H(+). Allows the formation of correctly charged Gln-tRNA(Gln) through the transamidation of misacylated Glu-tRNA(Gln) in organisms which lack glutaminyl-tRNA synthetase. The reaction takes place in the presence of glutamine and ATP through an activated gamma-phospho-Glu-tRNA(Gln). The polypeptide is Glutamyl-tRNA(Gln) amidotransferase subunit A (Ralstonia pickettii (strain 12J)).